The sequence spans 399 residues: Phosphoglycerate kinase (399 aa).

Substrate contacts are provided by residues 22 to 24 (DFN), Arg-38, 61 to 64 (HLGR), Arg-120, and Arg-153. Residues Lys-206, Gly-297, Glu-328, and 354–357 (GGDT) contribute to the ATP site.

It belongs to the phosphoglycerate kinase family. As to quaternary structure, monomer.

Its subcellular location is the cytoplasm. The enzyme catalyses (2R)-3-phosphoglycerate + ATP = (2R)-3-phospho-glyceroyl phosphate + ADP. Its pathway is carbohydrate degradation; glycolysis; pyruvate from D-glyceraldehyde 3-phosphate: step 2/5. The protein is Phosphoglycerate kinase of Campylobacter concisus (strain 13826).